The primary structure comprises 466 residues: Ras-GEF domain-containing family member 1C (466 aa).

A compositionally biased stretch (polar residues) spans 1 to 23 (MPQTLSASDMVTPGSLSPPTTEP). 2 disordered regions span residues 1–35 (MPQTLSASDMVTPGSLSPPTTEPTDGEQAGQPLLD) and 443–466 (SESPENQTEKERWKSLRSSILGKT). An N-terminal Ras-GEF domain is found at 34–164 (LDGAPSSASL…LLQALHQKLA (131 aa)). Residues 200–446 (DPYTLAQQLT…YLASYESESP (247 aa)) form the Ras-GEF domain.

In terms of biological role, guanine nucleotide exchange factor (GEF). This is Ras-GEF domain-containing family member 1C (RASGEF1C) from Macaca fascicularis (Crab-eating macaque).